The primary structure comprises 236 residues: Peptidase E (236 aa).

Active-site charge relay system residues include serine 122, aspartate 137, and histidine 159.

Belongs to the peptidase S51 family.

Its subcellular location is the cytoplasm. The catalysed reaction is Dipeptidase E catalyzes the hydrolysis of dipeptides Asp-|-Xaa. It does not act on peptides with N-terminal Glu, Asn or Gln, nor does it cleave isoaspartyl peptides.. In terms of biological role, hydrolyzes dipeptides containing N-terminal aspartate residues. May play a role in allowing the cell to use peptide aspartate to spare carbon otherwise required for the synthesis of the aspartate family of amino acids. The chain is Peptidase E from Shewanella sp. (strain MR-4).